We begin with the raw amino-acid sequence, 432 residues long: Enolase (432 aa).

(2R)-2-phosphoglycerate is bound at residue glutamine 167. Catalysis depends on glutamate 209, which acts as the Proton donor. Mg(2+) is bound by residues aspartate 246, glutamate 287, and aspartate 314. 4 residues coordinate (2R)-2-phosphoglycerate: lysine 339, arginine 368, serine 369, and lysine 390. The active-site Proton acceptor is the lysine 339.

This sequence belongs to the enolase family. Requires Mg(2+) as cofactor.

It localises to the cytoplasm. It is found in the secreted. Its subcellular location is the cell surface. The enzyme catalyses (2R)-2-phosphoglycerate = phosphoenolpyruvate + H2O. Its pathway is carbohydrate degradation; glycolysis; pyruvate from D-glyceraldehyde 3-phosphate: step 4/5. Its function is as follows. Catalyzes the reversible conversion of 2-phosphoglycerate (2-PG) into phosphoenolpyruvate (PEP). It is essential for the degradation of carbohydrates via glycolysis. The polypeptide is Enolase (Prochlorococcus marinus (strain MIT 9211)).